Here is a 329-residue protein sequence, read N- to C-terminus: tRNA(Ile)-lysidine synthase (329 aa).

Ser-37–Ser-42 is an ATP binding site.

Belongs to the tRNA(Ile)-lysidine synthase family.

Its subcellular location is the cytoplasm. It carries out the reaction cytidine(34) in tRNA(Ile2) + L-lysine + ATP = lysidine(34) in tRNA(Ile2) + AMP + diphosphate + H(+). In terms of biological role, ligates lysine onto the cytidine present at position 34 of the AUA codon-specific tRNA(Ile) that contains the anticodon CAU, in an ATP-dependent manner. Cytidine is converted to lysidine, thus changing the amino acid specificity of the tRNA from methionine to isoleucine. In Zymomonas mobilis subsp. mobilis (strain ATCC 31821 / ZM4 / CP4), this protein is tRNA(Ile)-lysidine synthase.